Consider the following 86-residue polypeptide: Progonadoliberin-2 (86 aa).

Positions 1-24 are cleaved as a signal peptide; that stretch reads MVSVCRLLLVAALLLCLQAQLSFS. A Pyrrolidone carboxylic acid modification is found at Gln-25. The residue at position 34 (Gly-34) is a Glycine amide.

The protein belongs to the GnRH family.

It localises to the secreted. Functionally, stimulates the secretion of gonadotropins. The polypeptide is Progonadoliberin-2 (gnrh2) (Clarias gariepinus (North African catfish)).